A 356-amino-acid chain; its full sequence is Zinc finger CW-type PWWP domain protein 2 (356 aa).

The CW-type zinc finger occupies 24-79; sequence MYVNKVWVQCENENCLKWRLLSSEDSAKVDHDEPWYCFMNTDSRYNNCSISEEDFP. Zn(2+) is bound by residues Cys33, Cys38, Cys60, and Cys71. In terms of domain architecture, PWWP spans 98–162; it reads LGSLVLVKLQ…ATFVGHYSIT (65 aa). A disordered region spans residues 279–307; it reads QALQPTATPDESEEGHGEEINMGEKLSKC.

Histone methylation reader which binds to non-methylated (H3K4me0), monomethylated (H3K4me1), dimethylated (H3K4me2) and trimethylated (H3K4me3) 'Lys-4' on histone H3. The order of binding preference is H3K4me3 &gt; H3K4me2 &gt; H3K4me1 &gt; H3K4me0. This Homo sapiens (Human) protein is Zinc finger CW-type PWWP domain protein 2 (ZCWPW2).